A 138-amino-acid chain; its full sequence is Acidic phospholipase A2 PL1 (138 aa).

The first 16 residues, 1-16, serve as a signal peptide directing secretion; sequence MRALWIVAVCLIGAEG. 7 cysteine pairs are disulfide-bonded: C42-C131, C44-C60, C59-C111, C65-C138, C66-C104, C73-C97, and C91-C102. Residues Y43, G45, and G47 each contribute to the Ca(2+) site. The active site involves H63. Residue D64 participates in Ca(2+) binding. D105 is a catalytic residue.

Belongs to the phospholipase A2 family. Group II subfamily. D49 sub-subfamily. It depends on Ca(2+) as a cofactor. In terms of tissue distribution, expressed by the venom gland.

It localises to the secreted. It carries out the reaction a 1,2-diacyl-sn-glycero-3-phosphocholine + H2O = a 1-acyl-sn-glycero-3-phosphocholine + a fatty acid + H(+). Its function is as follows. PLA2 catalyzes the calcium-dependent hydrolysis of the 2-acyl groups in 3-sn-phosphoglycerides. The polypeptide is Acidic phospholipase A2 PL1 (Vipera renardi (Steppe viper)).